Reading from the N-terminus, the 484-residue chain is Probable efflux pump outer membrane protein TtgC (484 aa).

An N-terminal signal peptide occupies residues methionine 1–glycine 17. Residue cysteine 18 is the site of N-palmitoyl cysteine attachment. A lipid anchor (S-diacylglycerol cysteine) is attached at cysteine 18.

It belongs to the outer membrane factor (OMF) (TC 1.B.17) family.

It localises to the cell outer membrane. Probable outer membrane component of the TtgABC efflux pump with unknown specificity. The polypeptide is Probable efflux pump outer membrane protein TtgC (ttgC) (Pseudomonas putida (strain ATCC 47054 / DSM 6125 / CFBP 8728 / NCIMB 11950 / KT2440)).